A 221-amino-acid chain; its full sequence is Octanoyltransferase (221 aa).

In terms of domain architecture, BPL/LPL catalytic spans 31–216 (GQIGDTLLLL…SLCAIFDLRP (186 aa)). Substrate contacts are provided by residues 76–83 (RGGEVTYH), 145–147 (AIG), and 159–161 (GLA). The active-site Acyl-thioester intermediate is the cysteine 177.

This sequence belongs to the LipB family.

The protein localises to the cytoplasm. It carries out the reaction octanoyl-[ACP] + L-lysyl-[protein] = N(6)-octanoyl-L-lysyl-[protein] + holo-[ACP] + H(+). It functions in the pathway protein modification; protein lipoylation via endogenous pathway; protein N(6)-(lipoyl)lysine from octanoyl-[acyl-carrier-protein]: step 1/2. Catalyzes the transfer of endogenously produced octanoic acid from octanoyl-acyl-carrier-protein onto the lipoyl domains of lipoate-dependent enzymes. Lipoyl-ACP can also act as a substrate although octanoyl-ACP is likely to be the physiological substrate. The chain is Octanoyltransferase from Chloroflexus aggregans (strain MD-66 / DSM 9485).